We begin with the raw amino-acid sequence, 403 residues long: MMHKPYLKSFPNKEGYFGKYGGAYLPPLLIEHFKEIGEAYLKISQSFDFIQELKSIRKHYQGRPTPLYYARRLSQKAGGAAIYLKREDLNHTGAHKLNHCMAEALLAKHLGKKKLIAETGAGQHGVALATAAAYFGMECEIHMGEVDIAKEHPNVIRMKMLGAKVVPVSFGERTLKEAVDSAFEAYLKDPANAIYAIGSVVGPHPFPKMVRDFQSVVGAEAKEQFLEMTGELPDHIVACVGGGSNAMGIFSAFIDDPVELWGVEPLGKGKSLGEHAASLSYGKEGVMHGFNSIMLQNEDGSPASVHSVASGLDYPSVGPEHAYLHEIGRTHSVGVSDEEAIKNFFALSRLEGIIPAIESAHAIAYGMKLAKERLGEKILINLSGRGDKDIDYVSETFGFGGEE.

Lysine 96 bears the N6-(pyridoxal phosphate)lysine mark.

This sequence belongs to the TrpB family. As to quaternary structure, tetramer of two alpha and two beta chains. The cofactor is pyridoxal 5'-phosphate.

It carries out the reaction (1S,2R)-1-C-(indol-3-yl)glycerol 3-phosphate + L-serine = D-glyceraldehyde 3-phosphate + L-tryptophan + H2O. Its pathway is amino-acid biosynthesis; L-tryptophan biosynthesis; L-tryptophan from chorismate: step 5/5. The beta subunit is responsible for the synthesis of L-tryptophan from indole and L-serine. In Wolinella succinogenes (strain ATCC 29543 / DSM 1740 / CCUG 13145 / JCM 31913 / LMG 7466 / NCTC 11488 / FDC 602W) (Vibrio succinogenes), this protein is Tryptophan synthase beta chain 1 (trpB1).